A 328-amino-acid polypeptide reads, in one-letter code: Beta-ketoacyl-[acyl-carrier-protein] synthase III (328 aa).

Active-site residues include Cys-114 and His-253. The segment at 254–258 (QANIR) is ACP-binding. Asn-283 is an active-site residue.

Belongs to the thiolase-like superfamily. FabH family. Homodimer.

It localises to the cytoplasm. It carries out the reaction malonyl-[ACP] + acetyl-CoA + H(+) = 3-oxobutanoyl-[ACP] + CO2 + CoA. The protein operates within lipid metabolism; fatty acid biosynthesis. Its function is as follows. Catalyzes the condensation reaction of fatty acid synthesis by the addition to an acyl acceptor of two carbons from malonyl-ACP. Catalyzes the first condensation reaction which initiates fatty acid synthesis and may therefore play a role in governing the total rate of fatty acid production. Possesses both acetoacetyl-ACP synthase and acetyl transacylase activities. Its substrate specificity determines the biosynthesis of branched-chain and/or straight-chain of fatty acids. The polypeptide is Beta-ketoacyl-[acyl-carrier-protein] synthase III (Clostridioides difficile (strain 630) (Peptoclostridium difficile)).